Here is a 348-residue protein sequence, read N- to C-terminus: Dihydroorotase (348 aa).

Residues H17 and H19 each contribute to the Zn(2+) site. Substrate-binding positions include 19–21 and N45; that span reads HLR. Zn(2+) contacts are provided by K103, H140, and H178. Position 103 is an N6-carboxylysine (K103). H140 provides a ligand contact to substrate. L223 contributes to the substrate binding site. D251 is a Zn(2+) binding site. D251 is an active-site residue. Substrate-binding residues include H255 and A267.

Belongs to the metallo-dependent hydrolases superfamily. DHOase family. Class II DHOase subfamily. Homodimer. Zn(2+) is required as a cofactor.

The enzyme catalyses (S)-dihydroorotate + H2O = N-carbamoyl-L-aspartate + H(+). It functions in the pathway pyrimidine metabolism; UMP biosynthesis via de novo pathway; (S)-dihydroorotate from bicarbonate: step 3/3. Catalyzes the reversible cyclization of carbamoyl aspartate to dihydroorotate. The sequence is that of Dihydroorotase from Yersinia pestis.